A 182-amino-acid polypeptide reads, in one-letter code: MNCLVYALGSLFLLSGLLLPSSEGKKKVSGSQGAIPPPDKGQPNDSEQGQAQPGDRVRGKGKGQALAAEEVLESSQEALHVTERKYLKRDWCKTQPLKQTIHEDGCNSRTIINRFCYGQCNSFYIPRHIRREEGSFQSCSFCKPKKFTTMVVTLNCPELQPPTKKKRITRVKQCRCISIDLD.

The first 24 residues, 1 to 24 (MNCLVYALGSLFLLSGLLLPSSEG), serve as a signal peptide directing secretion. The segment at 23-65 (EGKKKVSGSQGAIPPPDKGQPNDSEQGQAQPGDRVRGKGKGQA) is disordered. N-linked (GlcNAc...) asparagine glycosylation is present at N44. Disulfide bonds link C92–C142, C106–C156, C116–C174, and C120–C176. The CTCK domain maps to 92–182 (CKTQPLKQTI…QCRCISIDLD (91 aa)).

The protein belongs to the DAN family.

The protein localises to the secreted. Its function is as follows. Cytokine that has an axial patterning activity. Acts like BMP antagonist in embryonic explants. Blocks the BMP2 activity. The sequence is that of Gremlin-1 (grem1) from Xenopus laevis (African clawed frog).